Here is a 159-residue protein sequence, read N- to C-terminus: Voltage-dependent N-type calcium channel subunit alpha-1B (159 aa).

Residues 1–5 (LVTEI) traverse the membrane as a helical segment. One copy of the IV repeat lies at 1–159 (LVTEIADTDN…LMLNLFVAVI (159 aa)). The Extracellular portion of the chain corresponds to 6–13 (ADTDNFIN). The N-linked (GlcNAc...) asparagine glycan is linked to Asn-13. The helical transmembrane segment at 14 to 32 (LSFLRLFRAARLIKLLRQG) threads the bilayer. The Cytoplasmic segment spans residues 33-51 (YTIRILLWTFVQSFKALPY). Residues 52-71 (VCLLIAMLFFIYAIIGMQVF) traverse the membrane as a helical segment. Over 72–135 (GNIALNDETS…LTKNECGSDF (64 aa)) the chain is Extracellular. Residues 136–155 (AYFYFVSFIFLCSFLMLNLF) traverse the membrane as a helical segment. Residues 156 to 159 (VAVI) lie on the Cytoplasmic side of the membrane.

The protein belongs to the calcium channel alpha-1 subunit (TC 1.A.1.11) family. CACNA1B subfamily. In terms of assembly, multisubunit complex consisting of alpha-1, alpha-2, beta and delta subunits in a 1:1:1:1 ratio. The channel activity is directed by the pore-forming and voltage-sensitive alpha-1 subunit. In many cases, this subunit is sufficient to generate voltage-sensitive calcium channel activity. The auxiliary subunits beta and alpha-2/delta linked by a disulfide bridge regulate the channel activity. Interacts with RIMBP2. Post-translationally, phosphorylated in vitro by CaM-kinase II, PKA, PKC and CGPK.

The protein resides in the membrane. It carries out the reaction Ca(2+)(in) = Ca(2+)(out). In terms of biological role, voltage-sensitive calcium channels (VSCC) mediate the entry of calcium ions into excitable cells and are also involved in a variety of calcium-dependent processes, including muscle contraction, hormone or neurotransmitter release, gene expression, cell motility, cell division and cell death. This alpha-1B subunit gives rise to N-type calcium currents. N-type calcium channels belong to the 'high-voltage activated' (HVA) group. They are involved in pain signaling. Calcium channels containing alpha-1B subunit may play a role in directed migration of immature neurons. Mediates Ca(2+) release probability at hippocampal neuronal soma and synaptic terminals. In Gallus gallus (Chicken), this protein is Voltage-dependent N-type calcium channel subunit alpha-1B (CACNA1B).